Here is a 337-residue protein sequence, read N- to C-terminus: Adenine deaminase (337 aa).

Histidine 17, histidine 19, and histidine 197 together coordinate Zn(2+). Residue glutamate 200 is the Proton donor of the active site. Zn(2+) is bound at residue aspartate 278. Residue aspartate 279 participates in substrate binding.

This sequence belongs to the metallo-dependent hydrolases superfamily. Adenosine and AMP deaminases family. Adenine deaminase type 2 subfamily. The cofactor is Zn(2+).

It carries out the reaction adenine + H2O + H(+) = hypoxanthine + NH4(+). Functionally, catalyzes the hydrolytic deamination of adenine to hypoxanthine. Plays an important role in the purine salvage pathway and in nitrogen catabolism. The polypeptide is Adenine deaminase (Zymomonas mobilis subsp. mobilis (strain ATCC 31821 / ZM4 / CP4)).